Consider the following 91-residue polypeptide: Acylphosphatase (91 aa).

The region spanning 5–91 (WKKWNVRGVV…QEYKDFHVEF (87 aa)) is the Acylphosphatase-like domain. Active-site residues include arginine 20 and asparagine 38.

Belongs to the acylphosphatase family.

It carries out the reaction an acyl phosphate + H2O = a carboxylate + phosphate + H(+). This chain is Acylphosphatase (acyP), found in Fervidobacterium nodosum (strain ATCC 35602 / DSM 5306 / Rt17-B1).